Here is a 156-residue protein sequence, read N- to C-terminus: Inorganic triphosphatase (156 aa).

Positions 2–148 (GKEIEKKFIV…PRYLNSNLVK (147 aa)) constitute a CYTH domain. The active-site Proton acceptor is the Tyr-29.

Homodimer.

It carries out the reaction triphosphate + H2O = phosphate + diphosphate. The enzyme catalyses ATP + H2O = ADP + phosphate + H(+). Its function is as follows. Involved in the hydrolysis of the beta-gamma-phosphoanhydride linkage of triphosphate-containing substrates (inorganic or nucleoside-linked). Catalyzes vigorously the hydrolysis of inorganic triphosphate (PPPi), however it can also catalyze the hydrolysis of ATP to ADP and phosphate. It can use ribonucleotides such as GTP, CTP, or UTP and deoxynucleotides such as dATP, dGTP, dCTP, and dTTP. The protein is Inorganic triphosphatase of Acetivibrio thermocellus (strain ATCC 27405 / DSM 1237 / JCM 9322 / NBRC 103400 / NCIMB 10682 / NRRL B-4536 / VPI 7372) (Clostridium thermocellum).